Reading from the N-terminus, the 357-residue chain is Glutamine synthetase root isozyme A (357 aa).

Residues 19–99 (IIAEYIWVGG…VICDVYTPAG (81 aa)) form the GS beta-grasp domain. The GS catalytic domain maps to 106–357 (KRYNAAKIFS…AETTILWKKP (252 aa)).

Belongs to the glutamine synthetase family. As to quaternary structure, homooctamer.

It is found in the cytoplasm. It catalyses the reaction L-glutamate + NH4(+) + ATP = L-glutamine + ADP + phosphate + H(+). This is Glutamine synthetase root isozyme A (GS3A) from Pisum sativum (Garden pea).